The chain runs to 462 residues: Cysteine--tRNA ligase (462 aa).

C29 lines the Zn(2+) pocket. The short motif at 31-41 is the 'HIGH' region element; that stretch reads PTVYDHAHIGN. Zn(2+) is bound by residues C214, H239, and E243. Residues 272-276 carry the 'KMSKS' region motif; sequence KMSKS. K275 is a binding site for ATP.

Belongs to the class-I aminoacyl-tRNA synthetase family. As to quaternary structure, monomer. The cofactor is Zn(2+).

The protein localises to the cytoplasm. It carries out the reaction tRNA(Cys) + L-cysteine + ATP = L-cysteinyl-tRNA(Cys) + AMP + diphosphate. The protein is Cysteine--tRNA ligase of Azorhizobium caulinodans (strain ATCC 43989 / DSM 5975 / JCM 20966 / LMG 6465 / NBRC 14845 / NCIMB 13405 / ORS 571).